The chain runs to 122 residues: Large ribosomal subunit protein uL14 (122 aa).

Belongs to the universal ribosomal protein uL14 family. In terms of assembly, part of the 50S ribosomal subunit. Forms a cluster with proteins L3 and L19. In the 70S ribosome, L14 and L19 interact and together make contacts with the 16S rRNA in bridges B5 and B8.

Its function is as follows. Binds to 23S rRNA. Forms part of two intersubunit bridges in the 70S ribosome. The protein is Large ribosomal subunit protein uL14 of Oleidesulfovibrio alaskensis (strain ATCC BAA-1058 / DSM 17464 / G20) (Desulfovibrio alaskensis).